A 102-amino-acid polypeptide reads, in one-letter code: Protein translation factor SUI1 homolog (102 aa).

It belongs to the SUI1 family.

In Nitrosopumilus maritimus (strain SCM1), this protein is Protein translation factor SUI1 homolog.